The following is a 354-amino-acid chain: Ion-translocating oxidoreductase complex subunit D (354 aa).

The next 5 helical transmembrane spans lie at 19-39, 40-60, 70-89, 94-116, and 123-143; these read IMLW…YYFG, FGVL…EFLV, FYIS…VAIP, YWII…GGLG, and AMVG…TWLA. Thr186 bears the FMN phosphoryl threonine mark. Helical transmembrane passes span 215 to 235, 242 to 262, 266 to 286, 300 to 320, and 321 to 341; these read LAGL…LFLV, WQIP…SWLF, MPSP…FFIA, LVFG…GGYP, and DGAA…DQYT.

It belongs to the NqrB/RnfD family. The complex is composed of six subunits: RnfA, RnfB, RnfC, RnfD, RnfE and RnfG. The cofactor is FMN.

Its subcellular location is the cell inner membrane. In terms of biological role, part of a membrane-bound complex that couples electron transfer with translocation of ions across the membrane. The protein is Ion-translocating oxidoreductase complex subunit D of Mannheimia succiniciproducens (strain KCTC 0769BP / MBEL55E).